The sequence spans 2499 residues: Polyprotein P1234 (2499 aa).

In terms of domain architecture, Alphavirus-like MT spans 30–260 (VAQQVTPNDH…ENRADLQSWH (231 aa)). A nsP1 membrane-binding region spans residues 245–264 (GSTLYPENRADLQSWHLPSV). Cys-420 carries the S-palmitoyl cysteine; by host lipid modification. In terms of domain architecture, (+)RNA virus helicase ATP-binding spans 694–849 (ELTNPPYHEL…RDLCTSTHYK (156 aa)). Residue 725–732 (GTPGSGKS) participates in a ribonucleoside 5'-triphosphate binding. Residues 850 to 998 (YISRRCTQPV…LEEWQAEHED (149 aa)) enclose the (+)RNA virus helicase C-terminal domain. The Peptidase C9 domain maps to 1011–1339 (DPFASKVNTC…LAVSNIFDNY (329 aa)). The nucleolus localization signal stretch occupies residues 1012–1031 (PFASKVNTCWAKAIIPILRT). The For cysteine protease nsP2 activity role is filled by Cys-1020. A Nuclear export signal motif is present at residues 1065 to 1074 (TKMFGMDLSS). Residue His-1097 is the For cysteine protease nsP2 activity of the active site. The short motif at 1194-1198 (VSKRI) is the Nuclear localization signal element. The 160-residue stretch at 1346–1505 (APSYRVKRMN…RIADAIRMRE (160 aa)) folds into the Macro domain. 5 residues coordinate ADP-D-ribose: Asn-1369, Gly-1377, Gly-1457, Ile-1458, and Tyr-1459. Residues Cys-1608, Cys-1610, Cys-1633, and Cys-1651 each coordinate Zn(2+). 2 short sequence motifs (FGDF; binding to host G3BP1) span residues 1845–1848 (FGDF) and 1865–1868 (FGDF). The region spanning 2253 to 2368 (HPVLETDIGS…HGVVSDKIMA (116 aa)) is the RdRp catalytic domain.

Interacts with non-structural protein 3. Interacts with RNA-directed RNA polymerase nsP4. Interacts with protease nsP2. interacts with itself. As to quaternary structure, interacts with mRNA-capping enzyme nsP1. Interacts with host DDX1. Interacts with host DDX3. Interacts (via C-terminus) with host G3BP1; this interaction inhibits the formation of host stress granules on viral mRNAs and the nsp3-G3BP1 complexes bind viral RNAs and probably orchestrate the assembly of viral replication complexes. Interacts (via C-terminus) with host G3BP2; this interaction inhibits the formation of host stress granules on viral mRNAs and the nsp3-G3BP2 complexes bind viral RNAs and probably orchestrate the assembly of viral replication complexes. In terms of assembly, interacts with mRNA-capping enzyme nsP1. Interacts with protease nsP2. interacts with itself. Interacts with RNA-directed RNA polymerase nsP4. Interacts with mRNA-capping enzyme nsP1. Interacts with KPNA1/karyopherin-alpha1; this interaction probably allows the active transport of protease nsP2 into the host nucleus. The cofactor is Mg(2+). It depends on Mn(2+) as a cofactor. Specific enzymatic cleavages in vivo yield mature proteins. The processing of the polyprotein is temporally regulated. In early stages (1.7 hpi), P1234 is first cleaved in trans through its nsP2 protease activity, releasing P123' and nsP4, which associate to form the early replication complex. At the same time, P1234 is also cut at the nsP1/nsP2 site early in infection but with lower efficiency. After replication of the viral minus-strand RNAs (4 hpi), the polyproteins are cut at the nsP1/nsP2 and nsP2/nsP3 sites very efficiently, preventing accumulation of P123' and P1234 and allowing the formation of the late replication complex. NsP3'/nsP4 site is not cleaved anymore and P34 is produced rather than nsP4. Post-translationally, specific enzymatic cleavages in vivo yield mature proteins. The processing of the polyprotein is temporally regulated. In early stages (1.7 hpi), P123 is cleaved at the nsP1/nsP2 site with low efficiency. After replication of the viral minus-strand RNAs (4 hpi), the polyproteins are cut at the nsP1/nsP2 and nsP2/nsP3 sites very efficiently, preventing accumulation of P123 and allowing the formation of the late replication complex. In terms of processing, specific enzymatic cleavages in vivo yield mature proteins. The processing of the polyprotein is temporally regulated. In early stages (1.7 hpi), P123' is cleaved at the nsP1/nsP2 site with low efficiency. After replication of the viral minus-strand RNAs (4 hpi), the polyproteins are cut at the nsP1/nsP2 and nsP2/nsP3 sites very efficiently, preventing accumulation of P123' and allowing the formation of the late replication complex. Palmitoylated by host palmitoyltransferases ZDHHC2 and ZDHHC19. Post-translationally, phosphorylated by host on serines and threonines. In terms of processing, ubiquitinated; targets the protein for rapid degradation via the ubiquitin system. Nsp4 is present in extremely low quantities due to low frequency of translation through the amber stop-codon and the degradation by the ubiquitin pathway.

It is found in the host cytoplasmic vesicle membrane. Its subcellular location is the host cell membrane. It localises to the host cell projection. The protein localises to the host filopodium. The protein resides in the host nucleus. It is found in the host cytoplasm. It catalyses the reaction GTP + S-adenosyl-L-methionine = N(7)-methyl-GTP + S-adenosyl-L-homocysteine. The catalysed reaction is N(7)-methyl-GTP + L-histidyl-[protein] = N(tele)-(N(7)-methylguanosine 5'-phospho)-L-histidyl-[protein] + diphosphate. It carries out the reaction N(tele)-(N(7)-methylguanosine 5'-phospho)-L-histidyl-[protein] + a 5'-end diphospho-(purine-ribonucleoside) in mRNA + H(+) = a 5'-end (N(7)-methyl 5'-triphosphoguanosine)-(purine-ribonucleoside) in mRNA + L-histidyl-[protein]. The enzyme catalyses a 5'-end triphospho-ribonucleoside in mRNA + H2O = a 5'-end diphospho-ribonucleoside in mRNA + phosphate + H(+). It catalyses the reaction a ribonucleoside 5'-triphosphate + H2O = a ribonucleoside 5'-diphosphate + phosphate + H(+). The catalysed reaction is ATP + H2O = ADP + phosphate + H(+). It carries out the reaction RNA(n) + a ribonucleoside 5'-triphosphate = RNA(n+1) + diphosphate. The enzyme catalyses RNA(n) + ATP = RNA(n)-3'-adenine ribonucleotide + diphosphate. It catalyses the reaction 4-O-(ADP-D-ribosyl)-L-aspartyl-[protein] + H2O = L-aspartyl-[protein] + ADP-D-ribose + H(+). The catalysed reaction is 5-O-(ADP-D-ribosyl)-L-glutamyl-[protein] + H2O = L-glutamyl-[protein] + ADP-D-ribose + H(+). It carries out the reaction ADP-alpha-D-ribose 1''-phosphate + H2O = ADP-D-ribose + phosphate. In terms of biological role, inactive precursor of the viral replicase, which is activated by cleavages carried out by the viral protease nsP2. Its function is as follows. The early replication complex formed by the polyprotein P123 and nsP4 synthesizes minus-strand RNAs. As soon P123 is cleaved into mature proteins, the plus-strand RNAs synthesis begins. Functionally, the early replication complex formed by the polyprotein P123' and nsP4 synthesizes minus-strand RNAs. Polyprotein P123' is a short-lived polyprotein that accumulates during early stage of infection. As soon P123' is cleaved into mature proteins, the plus-strand RNAs synthesis begins. Cytoplasmic capping enzyme that catalyzes two virus-specific reactions: methyltransferase and nsP1 guanylyltransferase. mRNA-capping is necessary since all viral RNAs are synthesized in the cytoplasm, and host capping enzymes are restricted to the nucleus. The enzymatic reaction involves a covalent link between 7-methyl-GMP and nsP1, whereas eukaryotic capping enzymes form a covalent complex only with GMP. nsP1 capping consists in the following reactions: GTP is first methylated into 7-methyl-GMP and then is covalently linked to nsP1 to form the m7GMp-nsP1 complex from which 7-methyl-GMP complex is transferred to the mRNA to create the cap structure. NsP1 is needed for the initiation of the minus-strand RNAs synthesis. Probably serves as a membrane anchor for the replication complex composed of nsP1-nsP4. Palmitoylated nsP1 is remodeling host cell cytoskeleton, and induces filopodium-like structure formation at the surface of the host cell. In terms of biological role, multifunctional protein whose N-terminus is part of the RNA polymerase complex and displays NTPase, RNA triphosphatase and helicase activities. NTPase and RNA triphosphatase are involved in viral RNA capping and helicase keeps a check on the dsRNA replication intermediates. The C-terminus harbors a protease that specifically cleaves the polyproteins and releases the mature proteins. Required for the shutoff of minus-strand RNAs synthesis. Specifically inhibits the host IFN response by promoting the nuclear export of host STAT1. Also inhibits host transcription by inducing rapid proteasome-dependent degradation of POLR2A, a catalytic subunit of the RNAPII complex. The resulting inhibition of cellular protein synthesis serves to ensure maximal viral gene expression and to evade host immune response. Its function is as follows. Seems to be essential for minus-strand RNAs and subgenomic 26S mRNAs synthesis. Displays mono-ADP-ribosylhydrolase activity. ADP-ribosylation is a post-translational modification that controls various processes of the host cell and the virus probably needs to revert it for optimal viral replication. Binds proteins of FXR family and sequesters them into the viral RNA replication complexes thereby inhibiting the formation of host stress granules on viral mRNAs. The nsp3'-FXR complexes bind viral RNAs and probably orchestrate the assembly of viral replication complexes, thanks to the ability of FXR family members to self-assemble and bind DNA. Functionally, seems to be essential for minus-strand RNAs and subgenomic 26S mRNAs synthesis. Displays mono-ADP-ribosylhydrolase activity. ADP-ribosylation is a post-translantional modification that controls various processes of the host cell and the virus probably needs to revert it for optimal viral replication. Binds proteins of G3BP family and sequesters them into the viral RNA replication complexes thereby inhibiting the formation of host stress granules on viral mRNAs. The nsp3-G3BP complexes bind viral RNAs and probably orchestrate the assembly of viral replication complexes, thanks to the ability of G3BP family members to self-assemble and bind DNA. RNA dependent RNA polymerase. Replicates genomic and antigenomic RNA by recognizing replications specific signals. The early replication complex formed by the polyprotein P123 and nsP4 synthesizes minus-strand RNAs. The late replication complex composed of fully processed nsP1-nsP4 is responsible for the production of genomic and subgenomic plus-strand RNAs. The core catalytic domain of nsP4 also possesses terminal adenylyltransferase (TATase) activity that is probably involved in maintenance and repair of the poly(A) tail, an element required for replication of the viral genome. This chain is Polyprotein P1234, found in Aura virus (AURAV).